Here is a 692-residue protein sequence, read N- to C-terminus: Protein hook (692 aa).

The 118-residue stretch at 6–123 (SEMYYSLLEW…RLLQLVLGCA (118 aa)) folds into the Calponin-homology (CH) domain. Residues 135 to 576 (EIMGLEEELQ…YQSKVIQLET (442 aa)) are a coiled coil. Residues 161-180 (AGERSPSSSASGGAGSGGAV) form a disordered region.

Belongs to the hook family. Homodimer. Interacts with microtubules via its N-terminus.

It localises to the cytoplasm. The protein localises to the cytoskeleton. The protein resides in the endosome. Its subcellular location is the synapse. Its function is as follows. Involved in endocytic trafficking by stabilizing organelles of the endocytic pathway. Probably acts as a cytoskeletal linker protein required to tether endosome vesicles to the cytoskeleton. Involved in modulation of endocytosis at stages required for down-regulation of membrane proteins that control synapse size. Not involved in synaptic vesicle recycling. Required in R7 cells for boss endocytosis into multivesicular bodies (MVBs). Has a role in regulating adult longevity. In Drosophila willistoni (Fruit fly), this protein is Protein hook.